The following is a 173-amino-acid chain: Large ribosomal subunit protein uL14mz (173 aa).

The N-terminal 61 residues, M1 to G61, are a transit peptide targeting the mitochondrion.

This sequence belongs to the universal ribosomal protein uL14 family. As to quaternary structure, part of the mitochondrial 50S ribosomal subunit. Mostly expressed in leaves and inflorescences, including floral organs and meristems, and, to a lower extent, in pistils.

It localises to the mitochondrion. Functionally, binds to 23S rRNA in mitochondrion. This chain is Large ribosomal subunit protein uL14mz (HLP), found in Arabidopsis thaliana (Mouse-ear cress).